The sequence spans 208 residues: Large ribosomal subunit protein uL4 (208 aa).

The disordered stretch occupies residues 44–89 (RRQGTHKAKNRSEVRGGGRKPYRQKGTGHARQGSTRSPLMTGGGTI). Over residues 60-71 (GGRKPYRQKGTG) the composition is skewed to basic residues.

It belongs to the universal ribosomal protein uL4 family. In terms of assembly, part of the 50S ribosomal subunit.

In terms of biological role, one of the primary rRNA binding proteins, this protein initially binds near the 5'-end of the 23S rRNA. It is important during the early stages of 50S assembly. It makes multiple contacts with different domains of the 23S rRNA in the assembled 50S subunit and ribosome. Functionally, forms part of the polypeptide exit tunnel. This chain is Large ribosomal subunit protein uL4, found in Chlorobium phaeobacteroides (strain BS1).